Consider the following 300-residue polypeptide: Spermatogenesis-associated serine-rich protein 1 (300 aa).

The span at 1-10 (MSPSMLTGNS) shows a compositional bias: polar residues. 2 disordered regions span residues 1-42 (MSPS…MTEV) and 64-91 (TPSG…LPRV). Basic and acidic residues predominate over residues 27 to 42 (QLEKVPEKRDSGMTEV). Residues 64–85 (TPSGKSVSSSSSVETGPSVSEP) show a composition bias toward low complexity. S113 carries the phosphoserine modification.

This is Spermatogenesis-associated serine-rich protein 1 (SPATS1) from Homo sapiens (Human).